A 277-amino-acid chain; its full sequence is Ribosomal RNA small subunit methyltransferase A (277 aa).

6 residues coordinate S-adenosyl-L-methionine: N27, L29, G54, E75, D95, and N118.

The protein belongs to the class I-like SAM-binding methyltransferase superfamily. rRNA adenine N(6)-methyltransferase family. RsmA subfamily.

Its subcellular location is the cytoplasm. It carries out the reaction adenosine(1518)/adenosine(1519) in 16S rRNA + 4 S-adenosyl-L-methionine = N(6)-dimethyladenosine(1518)/N(6)-dimethyladenosine(1519) in 16S rRNA + 4 S-adenosyl-L-homocysteine + 4 H(+). In terms of biological role, specifically dimethylates two adjacent adenosines (A1518 and A1519) in the loop of a conserved hairpin near the 3'-end of 16S rRNA in the 30S particle. May play a critical role in biogenesis of 30S subunits. In Chlamydia muridarum (strain MoPn / Nigg), this protein is Ribosomal RNA small subunit methyltransferase A.